The chain runs to 343 residues: tRNA N6-adenosine threonylcarbamoyltransferase (343 aa).

Residues H120 and H124 each contribute to the Fe cation site. Substrate-binding positions include 142–146, D175, G188, D192, and N281; that span reads VVSGG. D310 provides a ligand contact to Fe cation.

Belongs to the KAE1 / TsaD family. Fe(2+) is required as a cofactor.

Its subcellular location is the cytoplasm. It catalyses the reaction L-threonylcarbamoyladenylate + adenosine(37) in tRNA = N(6)-L-threonylcarbamoyladenosine(37) in tRNA + AMP + H(+). Its function is as follows. Required for the formation of a threonylcarbamoyl group on adenosine at position 37 (t(6)A37) in tRNAs that read codons beginning with adenine. Is involved in the transfer of the threonylcarbamoyl moiety of threonylcarbamoyl-AMP (TC-AMP) to the N6 group of A37, together with TsaE and TsaB. TsaD likely plays a direct catalytic role in this reaction. The protein is tRNA N6-adenosine threonylcarbamoyltransferase of Bacillus cereus (strain ATCC 14579 / DSM 31 / CCUG 7414 / JCM 2152 / NBRC 15305 / NCIMB 9373 / NCTC 2599 / NRRL B-3711).